Reading from the N-terminus, the 249-residue chain is Triosephosphate isomerase (249 aa).

A substrate-binding site is contributed by 8–10; it reads NWK. The Electrophile role is filled by His-95. The active-site Proton acceptor is the Glu-166. Substrate contacts are provided by residues Gly-172, Ser-211, and 232 to 233; that span reads GG.

The protein belongs to the triosephosphate isomerase family. Homodimer.

The protein localises to the cytoplasm. The enzyme catalyses D-glyceraldehyde 3-phosphate = dihydroxyacetone phosphate. The protein operates within carbohydrate biosynthesis; gluconeogenesis. It functions in the pathway carbohydrate degradation; glycolysis; D-glyceraldehyde 3-phosphate from glycerone phosphate: step 1/1. Its function is as follows. Involved in the gluconeogenesis. Catalyzes stereospecifically the conversion of dihydroxyacetone phosphate (DHAP) to D-glyceraldehyde-3-phosphate (G3P). This chain is Triosephosphate isomerase, found in Granulibacter bethesdensis (strain ATCC BAA-1260 / CGDNIH1).